Reading from the N-terminus, the 591-residue chain is DNA ligase (591 aa).

NAD(+) is bound by residues 38 to 42 (DEKYD), 87 to 88 (SL), and Glu119. The active-site N6-AMP-lysine intermediate is Lys121. NAD(+) is bound by residues Arg142, Glu181, Lys298, and Lys322. Residues Cys415, Cys418, Cys433, and Cys439 each coordinate Zn(2+).

The protein belongs to the NAD-dependent DNA ligase family. LigA subfamily. The cofactor is Mg(2+). It depends on Mn(2+) as a cofactor.

The enzyme catalyses NAD(+) + (deoxyribonucleotide)n-3'-hydroxyl + 5'-phospho-(deoxyribonucleotide)m = (deoxyribonucleotide)n+m + AMP + beta-nicotinamide D-nucleotide.. Functionally, DNA ligase that catalyzes the formation of phosphodiester linkages between 5'-phosphoryl and 3'-hydroxyl groups in double-stranded DNA using NAD as a coenzyme and as the energy source for the reaction. It is essential for DNA replication and repair of damaged DNA. This is DNA ligase from Wigglesworthia glossinidia brevipalpis.